Consider the following 112-residue polypeptide: ATP synthase epsilon chain (112 aa).

Belongs to the ATPase epsilon chain family. F-type ATPases have 2 components, CF(1) - the catalytic core - and CF(0) - the membrane proton channel. CF(1) has five subunits: alpha(3), beta(3), gamma(1), delta(1), epsilon(1). CF(0) has three main subunits: a, b and c.

Its subcellular location is the cell inner membrane. Produces ATP from ADP in the presence of a proton gradient across the membrane. The sequence is that of ATP synthase epsilon chain from Rickettsia rickettsii (strain Sheila Smith).